The sequence spans 171 residues: MDVQERRFSCAAVGASLKVPAIAAGAAFFLSIATAAVARNARVYVSVARATVLALGAGVTAYALRALLAYVVPDLLVQEDGKMPIPHVDLTLDDVVEPSFASPGGDVVQETDDSFDSLIPTGELGELGYSFSPSTPSFEDKTSDLVGDVLTDLPETKRMARAIRTVLSQDT.

2 consecutive transmembrane segments (helical) span residues 13-35 and 50-72; these read VGAS…IATA and ATVL…AYVV.

The protein localises to the cell membrane. This is an uncharacterized protein from Treponema pallidum (strain Nichols).